The sequence spans 268 residues: Tryptophan synthase alpha chain (268 aa).

Active-site proton acceptor residues include glutamate 49 and aspartate 60.

This sequence belongs to the TrpA family. As to quaternary structure, tetramer of two alpha and two beta chains.

It catalyses the reaction (1S,2R)-1-C-(indol-3-yl)glycerol 3-phosphate + L-serine = D-glyceraldehyde 3-phosphate + L-tryptophan + H2O. It functions in the pathway amino-acid biosynthesis; L-tryptophan biosynthesis; L-tryptophan from chorismate: step 5/5. In terms of biological role, the alpha subunit is responsible for the aldol cleavage of indoleglycerol phosphate to indole and glyceraldehyde 3-phosphate. In Salmonella paratyphi A (strain ATCC 9150 / SARB42), this protein is Tryptophan synthase alpha chain.